Reading from the N-terminus, the 239-residue chain is Probable transcriptional regulatory protein Bcer98_0465 (239 aa).

Belongs to the TACO1 family. YeeN subfamily.

It localises to the cytoplasm. In Bacillus cytotoxicus (strain DSM 22905 / CIP 110041 / 391-98 / NVH 391-98), this protein is Probable transcriptional regulatory protein Bcer98_0465.